A 220-amino-acid chain; its full sequence is SAGA-associated factor 11 homolog (220 aa).

A disordered region spans residues 1–38; it reads MSTGTANSAVSSKSTNSTTSTSKVPVNEKSNNSQNANT. Residues 126 to 147 form an SGF11-type zinc finger; it reads CTCPNCDRPVSAARFAPHLEKC. 2 stretches are compositionally biased toward low complexity: residues 160–177 and 204–220; these read RRLA…SSSS and SQNS…GKTF. Residues 160–220 are disordered; sequence RRLATKESNS…GSKKNNGKTF (61 aa).

Belongs to the SGF11 family. Component of some SAGA transcription coactivator-HAT complexes. Within the SAGA complex, participates in a subcomplex of SAGA called the DUB module (deubiquitination module).

It localises to the nucleus. In terms of biological role, component of the transcription regulatory histone acetylation (HAT) complex SAGA, a multiprotein complex that activates transcription by remodeling chromatin and mediating histone acetylation and deubiquitination. Within the SAGA complex, participates in a subcomplex that specifically deubiquitinates histone H2B. The SAGA complex is recruited to specific gene promoters by activators, where it is required for transcription. The polypeptide is SAGA-associated factor 11 homolog (Musca domestica (House fly)).